The chain runs to 795 residues: MSNKQNATLNITGMTCAACSNRIEKRLNKMDNVKAQVNLTTEKATIEYDTNDYAINDFVTTVQKLGYDVVIDKAELDITGMTCAACSNRIEKVLNKAPGVKDATVNLTTEQAMVTYYPGQTDLDTLIGRIRNLGYDAQPKQSEEDQATRKQQELKHKRNKLMISTILSLPLLMTMLVHLFNMHLPDILMNPWFQFILATPIQFIIGWQFYVGAYKNLRNGGFNMDVLVALGTSAAYFYSIYEMIKWFSGATNMPHLYFETSAVLITLILFGKYLEARAKSQTTNALSELLNLQAKEARLIDDNGMEKMVPLNQVNVDDILLIKPGEKIPVDGQIIKGETAIDESMLTGESMPVDKHVDDVVIGSTMNTNGVITIMATKVGKDTALSNIIKVVEEAQSSKAPIQRLADIISGYFVPIVIAIALLTFLIWITLVHPGQFEDALVAAISVLVIACPCALGLATPTSIMVGTGRAAENGILFKGGEYVERTHQVDTVVFDKTGTLTHGKPEVTYFEGDKDTLTLVASAENNSEHPLATAIVNYAKQHKVNLVNVTNYQTLPGHGIQAIIDDSMLFVGNQKLMLDHQINIQSIKQKMKQMEAEGHTVMLIAYDGKLRGMIAVADTVKASAKEAIQQLSSMNIRTVMLTGDNERTAKAIAKEVGIDQVIAGVLPEDKAHHITQLQEQKHNVAMVGDGINDAPALVKADIGIAMGTGTEVAIEAADITILGGDIQLVPKAIHASHKTIRNIKQNLFWAFGYNIAGIPIAAMGLLAPWIAGAAMALSSVSVVSNALRLKRMKL.

HMA domains lie at 5-70 (QNAT…YDVV) and 72-138 (DKAE…YDAQ). Residues cysteine 16, cysteine 19, cysteine 83, and cysteine 86 each coordinate Cu(+). Helical transmembrane passes span 161–181 (LMISTILSLPLLMTMLVHLFN), 187–207 (ILMNPWFQFILATPIQFIIGW), 224–244 (MDVLVALGTSAAYFYSIYEMI), 256–276 (LYFETSAVLITLILFGKYLEA), 412–432 (YFVPIVIAIALLTFLIWITLV), and 440–460 (ALVAAISVLVIACPCALGLAT). Aspartate 496 functions as the 4-aspartylphosphate intermediate in the catalytic mechanism. Residues aspartate 690 and aspartate 694 each coordinate Mg(2+). Transmembrane regions (helical) follow at residues 747–764 (NLFWAFGYNIAGIPIAAM) and 770–788 (WIAGAAMALSSVSVVSNAL).

The protein belongs to the cation transport ATPase (P-type) (TC 3.A.3) family. Type IB subfamily.

Its subcellular location is the cell membrane. It carries out the reaction Cu(+)(in) + ATP + H2O = Cu(+)(out) + ADP + phosphate + H(+). In terms of biological role, involved in copper export. The sequence is that of Copper-exporting P-type ATPase (copA) from Staphylococcus haemolyticus (strain JCSC1435).